A 359-amino-acid polypeptide reads, in one-letter code: Probable S-adenosylmethionine-dependent methyltransferase At5g38100 (359 aa).

Positions 19, 63, 68, 104, 133, and 134 each coordinate S-adenosyl-L-homocysteine. Mg(2+) is bound by residues asparagine 172, aspartate 258, and phenylalanine 260.

Belongs to the methyltransferase superfamily. Type-7 methyltransferase family. As to quaternary structure, homodimer. It depends on Mg(2+) as a cofactor.

The polypeptide is Probable S-adenosylmethionine-dependent methyltransferase At5g38100 (Arabidopsis thaliana (Mouse-ear cress)).